Consider the following 782-residue polypeptide: Zinc finger Y-chromosomal protein 1 (782 aa).

2 disordered regions span residues 211 to 233 (ADLEGSSEVTMNAESGTDSSKLD) and 360 to 386 (LNQDESGGLDRVPKQKSKKKKRPESKQ). Over residues 217 to 229 (SEVTMNAESGTDS) the composition is skewed to polar residues. Positions 372 to 382 (PKQKSKKKKRP) match the Nuclear localization signal motif. The span at 373-382 (KQKSKKKKRP) shows a compositional bias: basic residues. 13 consecutive C2H2-type zinc fingers follow at residues 403-425 (YPCMFCGKKFKTKRFLKRHTKNH), 434-456 (YHCTECDYSTNKKISLHNHMESH), 466-488 (TECDDCRKNLSHAGTLCTHKTMH), 497-520 (CKCKFCDYETAEQTLLNHHLLVVH), 526-548 (HICGECGKGFRHPSALKKHIRVH), 554-577 (YECQYCEYKSADSSNLKTHIKSKH), 583-605 (LKCGICLLTFSDNKEAQQHAVLH), 611-634 (HQCSHCNHKSSNSSDLKRHIISVH), 640-662 (HKCDMCSKGFHRPSELKKHVATH), 668-691 (HQCRHCDFNSPDPFLLSHHILSAH), 697-719 (FKCKRCKKEFQQQCELQTHMKTH), 725-748 (YQCEYCEYSTKDASGFKRHVISIH), and 754-777 (HSCDFCKKGFRRPSEKNQHIMRHH).

The protein belongs to the krueppel C2H2-type zinc-finger protein family. ZFX/ZFY subfamily.

The protein resides in the nucleus. Its function is as follows. Probable transcriptional activator. Binds to the consensus sequence 5'-AGGCCY-3'. The polypeptide is Zinc finger Y-chromosomal protein 1 (Zfy1) (Mus musculus (Mouse)).